A 597-amino-acid polypeptide reads, in one-letter code: Adenine deaminase (597 aa).

The protein belongs to the metallo-dependent hydrolases superfamily. Adenine deaminase family. Mn(2+) serves as cofactor.

It carries out the reaction adenine + H2O + H(+) = hypoxanthine + NH4(+). The protein is Adenine deaminase of Paracoccus denitrificans (strain Pd 1222).